The sequence spans 248 residues: Small ribosomal subunit protein uS3 (248 aa).

A KH type-2 domain is found at 39–111; the sequence is IRKYLNKVYK…EIVFNVVEVK (73 aa). Positions 222–248 are disordered; it reads KPFEASAPRPQRRNRKEANNYVNAKKN.

Belongs to the universal ribosomal protein uS3 family. Part of the 30S ribosomal subunit. Forms a tight complex with proteins S10 and S14.

Binds the lower part of the 30S subunit head. Binds mRNA in the 70S ribosome, positioning it for translation. The protein is Small ribosomal subunit protein uS3 of Alteracholeplasma palmae (strain ATCC 49389 / J233) (Acholeplasma palmae).